A 300-amino-acid chain; its full sequence is NAD kinase (300 aa).

The active-site Proton acceptor is the Asp-78. Residues 78–79 (DG), 152–153 (ND), His-163, Arg-180, Asp-182, and 193–198 (TAYALS) each bind NAD(+).

Belongs to the NAD kinase family. The cofactor is a divalent metal cation.

Its subcellular location is the cytoplasm. The catalysed reaction is NAD(+) + ATP = ADP + NADP(+) + H(+). In terms of biological role, involved in the regulation of the intracellular balance of NAD and NADP, and is a key enzyme in the biosynthesis of NADP. Catalyzes specifically the phosphorylation on 2'-hydroxyl of the adenosine moiety of NAD to yield NADP. The protein is NAD kinase of Alcanivorax borkumensis (strain ATCC 700651 / DSM 11573 / NCIMB 13689 / SK2).